The primary structure comprises 780 residues: Vezatin (780 aa).

2 consecutive transmembrane segments (helical) span residues 140-160 (ATPNTWDVSLLFAFISLLIMF) and 162-182 (TCWIVSSWLVWGIILFLYLII). Positions 430 to 467 (VRSLQLHLKALLNEVIILEDELEKLVCTKETQELLSEA) form a coiled coil. Disordered regions lie at residues 620-718 (DPVE…PRDT) and 757-780 (QEQTFGDEEEEQLVEGGENEVEEK). Residues 624 to 643 (SVSNSEPPMNSDTEKVNSNA) are compositionally biased toward polar residues. Composition is skewed to basic and acidic residues over residues 647–663 (ETSKPCAGDKEDSRTEY) and 690–699 (TMCHQHESEA). Over residues 702 to 711 (PQAAAAGATA) the composition is skewed to low complexity. The span at 761–780 (FGDEEEEQLVEGGENEVEEK) shows a compositional bias: acidic residues.

The protein belongs to the vezatin family. Interacts with USH2A (via the cytoplasmic region); the interaction associates VEZT with the USH2 complex at the stereocilia base. Interacts with myosin MYO7A and the cadherin-catenins complex. In terms of tissue distribution, expressed in developing cochlear hair cells. Isoform 1, isoform 2 and isoform 3 are expressed in testis. In the seminiferous epithelium, present exclusively in the acrosome of spermatids (at protein level).

The protein localises to the cell membrane. The protein resides in the cell projection. It is found in the stereocilium membrane. Its subcellular location is the cell junction. It localises to the adherens junction. The protein localises to the nucleus. The protein resides in the cytoplasmic vesicle. It is found in the secretory vesicle. Its subcellular location is the acrosome. In terms of biological role, plays a pivotal role in the establishment of adherens junctions and their maintenance in adult life. Required for morphogenesis of the preimplantation embryo, and for the implantation process. The protein is Vezatin of Mus musculus (Mouse).